Here is a 437-residue protein sequence, read N- to C-terminus: Ribulose bisphosphate carboxylase/oxygenase activase, chloroplastic (437 aa).

Polar residues predominate over residues 1–10; it reads MATAVSTIGS. The segment at 1-26 is disordered; it reads MATAVSTIGSVNRAPPNLNGSSSSAS. 165 to 172 is a binding site for ATP; it reads GGKGQGKS.

It belongs to the RuBisCO activase family.

Its subcellular location is the plastid. The protein localises to the chloroplast stroma. Activation of RuBisCO (ribulose-1,5-bisphosphate carboxylase/oxygenase; EC 4.1.1.39) involves the ATP-dependent carboxylation of the epsilon-amino group of lysine leading to a carbamate structure. The protein is Ribulose bisphosphate carboxylase/oxygenase activase, chloroplastic (RCA) of Malus domestica (Apple).